Here is a 203-residue protein sequence, read N- to C-terminus: VEL1-related protein SPBPB2B2.15 (203 aa).

Residues 1–16 form the signal peptide; that stretch reads MFKNLIFLFFIGLATA.

This sequence belongs to the VEL1 family.

It is found in the cytoplasm. The protein localises to the cytosol. This chain is VEL1-related protein SPBPB2B2.15, found in Schizosaccharomyces pombe (strain 972 / ATCC 24843) (Fission yeast).